An 82-amino-acid chain; its full sequence is Small ribosomal subunit protein uS17 (82 aa).

This sequence belongs to the universal ribosomal protein uS17 family. In terms of assembly, part of the 30S ribosomal subunit.

Functionally, one of the primary rRNA binding proteins, it binds specifically to the 5'-end of 16S ribosomal RNA. This chain is Small ribosomal subunit protein uS17, found in Shewanella sediminis (strain HAW-EB3).